A 401-amino-acid chain; its full sequence is 1-deoxy-D-xylulose 5-phosphate reductoisomerase (401 aa).

NADPH contacts are provided by Thr10, Gly11, Ser12, Ile13, Asn38, and Asn124. Lys125 is a binding site for 1-deoxy-D-xylulose 5-phosphate. Glu126 serves as a coordination point for NADPH. Asp150 lines the Mn(2+) pocket. Residues Ser151, Glu152, Ser186, and His209 each contribute to the 1-deoxy-D-xylulose 5-phosphate site. Glu152 contributes to the Mn(2+) binding site. Gly215 is a binding site for NADPH. 1-deoxy-D-xylulose 5-phosphate is bound by residues Ser222, Asn227, Lys228, and Glu231. Residue Glu231 coordinates Mn(2+).

The protein belongs to the DXR family. Requires Mg(2+) as cofactor. Mn(2+) is required as a cofactor.

The catalysed reaction is 2-C-methyl-D-erythritol 4-phosphate + NADP(+) = 1-deoxy-D-xylulose 5-phosphate + NADPH + H(+). The protein operates within isoprenoid biosynthesis; isopentenyl diphosphate biosynthesis via DXP pathway; isopentenyl diphosphate from 1-deoxy-D-xylulose 5-phosphate: step 1/6. Catalyzes the NADPH-dependent rearrangement and reduction of 1-deoxy-D-xylulose-5-phosphate (DXP) to 2-C-methyl-D-erythritol 4-phosphate (MEP). The polypeptide is 1-deoxy-D-xylulose 5-phosphate reductoisomerase (Vibrio campbellii (strain ATCC BAA-1116)).